Reading from the N-terminus, the 344-residue chain is Glycerol-3-phosphate dehydrogenase [NAD(P)+] (344 aa).

The NADPH site is built by Ser-11, Trp-12, His-32, Arg-33, and Lys-106. Sn-glycerol 3-phosphate contacts are provided by Lys-106, Gly-136, and Ser-138. Ala-140 provides a ligand contact to NADPH. Sn-glycerol 3-phosphate contacts are provided by Lys-192, Asp-245, Ser-255, Arg-256, and Asn-257. Lys-192 serves as the catalytic Proton acceptor. Arg-256 is a binding site for NADPH. Residues Val-280 and Glu-282 each contribute to the NADPH site.

The protein belongs to the NAD-dependent glycerol-3-phosphate dehydrogenase family.

The protein resides in the cytoplasm. It catalyses the reaction sn-glycerol 3-phosphate + NAD(+) = dihydroxyacetone phosphate + NADH + H(+). It carries out the reaction sn-glycerol 3-phosphate + NADP(+) = dihydroxyacetone phosphate + NADPH + H(+). Its pathway is membrane lipid metabolism; glycerophospholipid metabolism. In terms of biological role, catalyzes the reduction of the glycolytic intermediate dihydroxyacetone phosphate (DHAP) to sn-glycerol 3-phosphate (G3P), the key precursor for phospholipid synthesis. In Geobacillus kaustophilus (strain HTA426), this protein is Glycerol-3-phosphate dehydrogenase [NAD(P)+].